A 443-amino-acid chain; its full sequence is Exodeoxyribonuclease 7 large subunit (443 aa).

Belongs to the XseA family. In terms of assembly, heterooligomer composed of large and small subunits.

Its subcellular location is the cytoplasm. The catalysed reaction is Exonucleolytic cleavage in either 5'- to 3'- or 3'- to 5'-direction to yield nucleoside 5'-phosphates.. Bidirectionally degrades single-stranded DNA into large acid-insoluble oligonucleotides, which are then degraded further into small acid-soluble oligonucleotides. In Legionella pneumophila (strain Paris), this protein is Exodeoxyribonuclease 7 large subunit.